The primary structure comprises 147 residues: Transcriptional repressor NrdR (147 aa).

A zinc finger spans residues 3-34 (CPYCGNVETTVVETRESDEGDAVRRRRRCSAC). An ATP-cone domain is found at 49–139 (PAVVKKNGDR…VYREFEDIDA (91 aa)).

The protein belongs to the NrdR family. Zn(2+) serves as cofactor.

Its function is as follows. Negatively regulates transcription of bacterial ribonucleotide reductase nrd genes and operons by binding to NrdR-boxes. The protein is Transcriptional repressor NrdR of Leptothrix cholodnii (strain ATCC 51168 / LMG 8142 / SP-6) (Leptothrix discophora (strain SP-6)).